We begin with the raw amino-acid sequence, 398 residues long: Elongation factor Tu (398 aa).

The 198-residue stretch at 10-207 (KPHVNIGTIG…TVDSYIPEPE (198 aa)) folds into the tr-type G domain. Positions 19–26 (GHVDHGKT) are G1. Residue 19–26 (GHVDHGKT) coordinates GTP. T26 contacts Mg(2+). A G2 region spans residues 63–67 (GITIN). The interval 84 to 87 (DAPG) is G3. GTP-binding positions include 84–88 (DAPGH) and 139–142 (NKVD). The interval 139–142 (NKVD) is G4. The tract at residues 177–179 (SAL) is G5.

This sequence belongs to the TRAFAC class translation factor GTPase superfamily. Classic translation factor GTPase family. EF-Tu/EF-1A subfamily. As to quaternary structure, monomer.

Its subcellular location is the cytoplasm. It catalyses the reaction GTP + H2O = GDP + phosphate + H(+). Its function is as follows. GTP hydrolase that promotes the GTP-dependent binding of aminoacyl-tRNA to the A-site of ribosomes during protein biosynthesis. This chain is Elongation factor Tu, found in Streptococcus pyogenes serotype M28 (strain MGAS6180).